Reading from the N-terminus, the 858-residue chain is MSASVAAPPPALSRKAEFKAAKAELLARFQTATNVTPLMHALSRATDDALRRLWHECGLPATLALVAVGGFGRGELSPHSDVDILVLLPDAHARELDERIERFIGMAWDLGLEIGSSVRTVDQCIEEASQDVTVQTSLLEARRIVGSTALFERFMLRYREALDARAFFQAKVLEMRQRHAKFQDTPYSLEPNVKESPGGLRDLQTILWIARAAGFGSSWRELDTRGLITDREARELRRNEGFLKTLRARLHVIAGRRQDILVFDLQTQAAESFGYRPTPAKRASEQLMRRYYWAAKAVTQLATILIQNIEAQLFPATSGVTRVLSPGRFVEKQGMLEIAADDVFERHPDAILEAFLLYEATRGVKGLSARTLRALYNSRDVMNNAWRRDPRNRHTFMQILQQPEGITHAFRLMNQTSVLGRYLLNFRRIVGQMQHDLYHVYTVDQHILMVLRNIRRFAVAEHAHEYPFCSQLIVNFERPWVLYVAALFHDIAKGRGGDHSALGMTDARRFCREHGIEGGDAALVVWLVQHHLTMSQVAQKQDTSDPEVIKRFADLVGNERRLTALYLLTVADIRGTSPKVWNTWKGKLLEDLYRATLAVLGGAQPDAHSELKTRQEEALALLRLETVPPDAHRALWDQLDVGYFLRHDAADIAWQTRVLYRHVAADTAIVRARPSPVGDALQVLVYVKDRSDLFAGICAYFDRNGLSVLDARVNTTRHGYALDNFIVTQTERDVQYRDIANLVEQQLAARLAESAPLPEPSKGRLSRLSRTFPITPRVDLRADERGQYYILSVSANDRPGLLYSIARVLAEHRVGVHAARINTLGERVEDVFMLDGTGLSDNRLQIQVETELLRAIAV.

The interval Met1–Leu324 is uridylyltransferase. The segment at Ser325 to Leu681 is uridylyl-removing. One can recognise an HD domain in the interval Val443–Leu565. ACT domains are found at residues Gln682–Ser761 and Ile790–Val858.

This sequence belongs to the GlnD family. Requires Mg(2+) as cofactor.

The enzyme catalyses [protein-PII]-L-tyrosine + UTP = [protein-PII]-uridylyl-L-tyrosine + diphosphate. The catalysed reaction is [protein-PII]-uridylyl-L-tyrosine + H2O = [protein-PII]-L-tyrosine + UMP + H(+). With respect to regulation, uridylyltransferase (UTase) activity is inhibited by glutamine, while glutamine activates uridylyl-removing (UR) activity. In terms of biological role, modifies, by uridylylation and deuridylylation, the PII regulatory proteins (GlnB and homologs), in response to the nitrogen status of the cell that GlnD senses through the glutamine level. Under low glutamine levels, catalyzes the conversion of the PII proteins and UTP to PII-UMP and PPi, while under higher glutamine levels, GlnD hydrolyzes PII-UMP to PII and UMP (deuridylylation). Thus, controls uridylylation state and activity of the PII proteins, and plays an important role in the regulation of nitrogen assimilation and metabolism. This chain is Bifunctional uridylyltransferase/uridylyl-removing enzyme, found in Burkholderia thailandensis (strain ATCC 700388 / DSM 13276 / CCUG 48851 / CIP 106301 / E264).